The following is a 286-amino-acid chain: ATP phosphoribosyltransferase (286 aa).

The protein belongs to the ATP phosphoribosyltransferase family. Long subfamily. Requires Mg(2+) as cofactor.

It localises to the cytoplasm. The catalysed reaction is 1-(5-phospho-beta-D-ribosyl)-ATP + diphosphate = 5-phospho-alpha-D-ribose 1-diphosphate + ATP. It functions in the pathway amino-acid biosynthesis; L-histidine biosynthesis; L-histidine from 5-phospho-alpha-D-ribose 1-diphosphate: step 1/9. Its activity is regulated as follows. Feedback inhibited by histidine. In terms of biological role, catalyzes the condensation of ATP and 5-phosphoribose 1-diphosphate to form N'-(5'-phosphoribosyl)-ATP (PR-ATP). Has a crucial role in the pathway because the rate of histidine biosynthesis seems to be controlled primarily by regulation of HisG enzymatic activity. This Arthrobacter sp. (strain FB24) protein is ATP phosphoribosyltransferase.